Here is a 453-residue protein sequence, read N- to C-terminus: Tubulin delta chain (453 aa).

143-149 serves as a coordination point for GTP; the sequence is AGGTGSG.

This sequence belongs to the tubulin family. Found in a complex with TEDC1, TEDC2, TUBE1 and TUBD1.

The protein localises to the nucleus. It localises to the cytoplasm. Its subcellular location is the cytoskeleton. It is found in the microtubule organizing center. The protein resides in the centrosome. The protein localises to the centriole. It localises to the cell projection. Its subcellular location is the cilium. In terms of biological role, acts as a positive regulator of hedgehog signaling and regulates ciliary function. This is Tubulin delta chain (TUBD1) from Canis lupus familiaris (Dog).